The following is a 195-amino-acid chain: Dephospho-CoA kinase (195 aa).

The DPCK domain maps to 3–195 (IIGLTGSIAM…LFVIKSLLKN (193 aa)). ATP is bound at residue 11–16 (AMGKST).

Belongs to the CoaE family.

The protein resides in the cytoplasm. It carries out the reaction 3'-dephospho-CoA + ATP = ADP + CoA + H(+). The protein operates within cofactor biosynthesis; coenzyme A biosynthesis; CoA from (R)-pantothenate: step 5/5. Functionally, catalyzes the phosphorylation of the 3'-hydroxyl group of dephosphocoenzyme A to form coenzyme A. The protein is Dephospho-CoA kinase of Bartonella henselae (strain ATCC 49882 / DSM 28221 / CCUG 30454 / Houston 1) (Rochalimaea henselae).